The following is a 210-amino-acid chain: Ribosomal RNA large subunit methyltransferase E (210 aa).

S-adenosyl-L-methionine is bound by residues Gly-61, Trp-63, Asp-81, Asp-97, and Asp-122. The active-site Proton acceptor is Lys-162.

Belongs to the class I-like SAM-binding methyltransferase superfamily. RNA methyltransferase RlmE family.

The protein resides in the cytoplasm. The enzyme catalyses uridine(2552) in 23S rRNA + S-adenosyl-L-methionine = 2'-O-methyluridine(2552) in 23S rRNA + S-adenosyl-L-homocysteine + H(+). Functionally, specifically methylates the uridine in position 2552 of 23S rRNA at the 2'-O position of the ribose in the fully assembled 50S ribosomal subunit. The sequence is that of Ribosomal RNA large subunit methyltransferase E from Xanthomonas axonopodis pv. citri (strain 306).